We begin with the raw amino-acid sequence, 278 residues long: 2-dehydro-3-deoxyphosphooctonate aldolase (278 aa).

The protein belongs to the KdsA family.

The protein resides in the cytoplasm. It carries out the reaction D-arabinose 5-phosphate + phosphoenolpyruvate + H2O = 3-deoxy-alpha-D-manno-2-octulosonate-8-phosphate + phosphate. Its pathway is carbohydrate biosynthesis; 3-deoxy-D-manno-octulosonate biosynthesis; 3-deoxy-D-manno-octulosonate from D-ribulose 5-phosphate: step 2/3. It functions in the pathway bacterial outer membrane biogenesis; lipopolysaccharide biosynthesis. In Dechloromonas aromatica (strain RCB), this protein is 2-dehydro-3-deoxyphosphooctonate aldolase.